The primary structure comprises 285 residues: 4-diphosphocytidyl-2-C-methyl-D-erythritol kinase (285 aa).

Lys11 is an active-site residue. 93–103 (PLAAGLAGGSA) provides a ligand contact to ATP. Residue Asp135 is part of the active site.

The protein belongs to the GHMP kinase family. IspE subfamily.

The catalysed reaction is 4-CDP-2-C-methyl-D-erythritol + ATP = 4-CDP-2-C-methyl-D-erythritol 2-phosphate + ADP + H(+). The protein operates within isoprenoid biosynthesis; isopentenyl diphosphate biosynthesis via DXP pathway; isopentenyl diphosphate from 1-deoxy-D-xylulose 5-phosphate: step 3/6. Its function is as follows. Catalyzes the phosphorylation of the position 2 hydroxy group of 4-diphosphocytidyl-2C-methyl-D-erythritol. The polypeptide is 4-diphosphocytidyl-2-C-methyl-D-erythritol kinase (Moorella thermoacetica (strain ATCC 39073 / JCM 9320)).